Reading from the N-terminus, the 402-residue chain is Deoxyguanosinetriphosphate triphosphohydrolase-like protein (402 aa).

One can recognise an HD domain in the interval 73–217 (RLTHTIEVAQ…AAIADDIAYN (145 aa)).

Belongs to the dGTPase family. Type 2 subfamily.

The sequence is that of Deoxyguanosinetriphosphate triphosphohydrolase-like protein from Brucella anthropi (strain ATCC 49188 / DSM 6882 / CCUG 24695 / JCM 21032 / LMG 3331 / NBRC 15819 / NCTC 12168 / Alc 37) (Ochrobactrum anthropi).